A 304-amino-acid chain; its full sequence is UDP-3-O-acyl-N-acetylglucosamine deacetylase (304 aa).

Histidine 78, histidine 237, and aspartate 241 together coordinate Zn(2+). Residue histidine 264 is the Proton donor of the active site.

The protein belongs to the LpxC family. Zn(2+) serves as cofactor.

It carries out the reaction a UDP-3-O-[(3R)-3-hydroxyacyl]-N-acetyl-alpha-D-glucosamine + H2O = a UDP-3-O-[(3R)-3-hydroxyacyl]-alpha-D-glucosamine + acetate. It participates in glycolipid biosynthesis; lipid IV(A) biosynthesis; lipid IV(A) from (3R)-3-hydroxytetradecanoyl-[acyl-carrier-protein] and UDP-N-acetyl-alpha-D-glucosamine: step 2/6. In terms of biological role, catalyzes the hydrolysis of UDP-3-O-myristoyl-N-acetylglucosamine to form UDP-3-O-myristoylglucosamine and acetate, the committed step in lipid A biosynthesis. The protein is UDP-3-O-acyl-N-acetylglucosamine deacetylase of Thioalkalivibrio sulfidiphilus (strain HL-EbGR7).